Consider the following 154-residue polypeptide: Prefoldin subunit 2 (154 aa).

The span at 1–18 (MAENGGRAGKSSGSGTGK) shows a compositional bias: gly residues. Disordered regions lie at residues 1–20 (MAENGGRAGKSSGSGTGKGA) and 124–154 (IRLMGEDEKPAAKENSEGAGAKASSAGVLVS). Basic and acidic residues predominate over residues 124–139 (IRLMGEDEKPAAKENS). Over residues 140 to 154 (EGAGAKASSAGVLVS) the composition is skewed to low complexity.

The protein belongs to the prefoldin subunit beta family. In terms of assembly, heterohexamer of two PFD-alpha type and four PFD-beta type subunits. Component of the PAQosome complex which is responsible for the biogenesis of several protein complexes and which consists of R2TP complex members RUVBL1, RUVBL2, RPAP3 and PIH1D1, URI complex members PFDN2, PFDN6, PDRG1, UXT and URI1 as well as ASDURF, POLR2E and DNAAF10/WDR92. Interacts with URI1; the interaction is phosphorylation-dependent and occurs in a growth-dependent manner.

The protein localises to the nucleus. It localises to the cytoplasm. Its subcellular location is the mitochondrion. Binds specifically to cytosolic chaperonin (c-CPN) and transfers target proteins to it. Binds to nascent polypeptide chain and promotes folding in an environment in which there are many competing pathways for nonnative proteins. This Bos taurus (Bovine) protein is Prefoldin subunit 2 (PFDN2).